The chain runs to 207 residues: Protein-L-isoaspartate O-methyltransferase (207 aa).

Residue S56 is part of the active site.

This sequence belongs to the methyltransferase superfamily. L-isoaspartyl/D-aspartyl protein methyltransferase family.

Its subcellular location is the cytoplasm. It catalyses the reaction [protein]-L-isoaspartate + S-adenosyl-L-methionine = [protein]-L-isoaspartate alpha-methyl ester + S-adenosyl-L-homocysteine. Catalyzes the methyl esterification of L-isoaspartyl residues in peptides and proteins that result from spontaneous decomposition of normal L-aspartyl and L-asparaginyl residues. It plays a role in the repair and/or degradation of damaged proteins. This Pyrobaculum neutrophilum (strain DSM 2338 / JCM 9278 / NBRC 100436 / V24Sta) (Thermoproteus neutrophilus) protein is Protein-L-isoaspartate O-methyltransferase.